The following is a 273-amino-acid chain: 4-hydroxy-tetrahydrodipicolinate reductase (273 aa).

NAD(+) is bound by residues 12-17 (GAGGRM) and E38. Residue R39 participates in NADP(+) binding. NAD(+) contacts are provided by residues 102–104 (GTT) and 126–129 (AANF). H159 serves as the catalytic Proton donor/acceptor. H160 contributes to the (S)-2,3,4,5-tetrahydrodipicolinate binding site. The active-site Proton donor is K163. A (S)-2,3,4,5-tetrahydrodipicolinate-binding site is contributed by 169–170 (GT).

This sequence belongs to the DapB family. Homotetramer.

Its subcellular location is the cytoplasm. The enzyme catalyses (S)-2,3,4,5-tetrahydrodipicolinate + NAD(+) + H2O = (2S,4S)-4-hydroxy-2,3,4,5-tetrahydrodipicolinate + NADH + H(+). It catalyses the reaction (S)-2,3,4,5-tetrahydrodipicolinate + NADP(+) + H2O = (2S,4S)-4-hydroxy-2,3,4,5-tetrahydrodipicolinate + NADPH + H(+). It participates in amino-acid biosynthesis; L-lysine biosynthesis via DAP pathway; (S)-tetrahydrodipicolinate from L-aspartate: step 4/4. Functionally, catalyzes the conversion of 4-hydroxy-tetrahydrodipicolinate (HTPA) to tetrahydrodipicolinate. In Pectobacterium atrosepticum (strain SCRI 1043 / ATCC BAA-672) (Erwinia carotovora subsp. atroseptica), this protein is 4-hydroxy-tetrahydrodipicolinate reductase.